Reading from the N-terminus, the 601-residue chain is Glutathione-regulated potassium-efflux system protein KefB (601 aa).

The next 13 membrane-spanning stretches (helical) occupy residues 4 to 24 (ADLL…VPLA), 29 to 49 (IGAV…GLGF), 55 to 75 (EILH…GLEL), 87 to 107 (IFGV…GLLM), 111 to 131 (FLWQ…TAMA), 152 to 172 (VLLF…LLAG), 177 to 197 (HFDW…LIGG), 207 to 227 (FIAA…LVLS), 230 to 250 (LFMD…GVLL), 262 to 282 (AIDP…GMSL), 284 to 304 (LGVL…LVVI), 324 to 344 (MQFA…FSTA), and 356 to 376 (ALLL…MKGI). The region spanning 400 to 519 (KPQVIVVGFG…AGVTQFSRET (120 aa)) is the RCK N-terminal domain.

This sequence belongs to the monovalent cation:proton antiporter 2 (CPA2) transporter (TC 2.A.37) family. KefB subfamily. In terms of assembly, interacts with the regulatory subunit KefG.

The protein resides in the cell inner membrane. Functionally, pore-forming subunit of a potassium efflux system that confers protection against electrophiles. Catalyzes K(+)/H(+) antiport. The protein is Glutathione-regulated potassium-efflux system protein KefB of Salmonella paratyphi C (strain RKS4594).